The primary structure comprises 421 residues: Histidine--tRNA ligase (421 aa).

It belongs to the class-II aminoacyl-tRNA synthetase family. As to quaternary structure, homodimer.

Its subcellular location is the cytoplasm. The catalysed reaction is tRNA(His) + L-histidine + ATP = L-histidyl-tRNA(His) + AMP + diphosphate + H(+). This chain is Histidine--tRNA ligase, found in Francisella tularensis subsp. holarctica (strain LVS).